The chain runs to 267 residues: tRNA pseudouridine synthase A (267 aa).

Aspartate 55 (nucleophile) is an active-site residue. Tyrosine 109 serves as a coordination point for substrate.

The protein belongs to the tRNA pseudouridine synthase TruA family.

It carries out the reaction uridine(38/39/40) in tRNA = pseudouridine(38/39/40) in tRNA. Functionally, formation of pseudouridine at positions 38, 39 and 40 in the anticodon stem and loop of transfer RNAs. The chain is tRNA pseudouridine synthase A from Natronomonas pharaonis (strain ATCC 35678 / DSM 2160 / CIP 103997 / JCM 8858 / NBRC 14720 / NCIMB 2260 / Gabara) (Halobacterium pharaonis).